Consider the following 499-residue polypeptide: U4/U6 small nuclear ribonucleoprotein Prp31 (499 aa).

The tract at residues 1–37 is disordered; it reads MSLADELLADLEEAAEEEEGGSYGEEEEEPAIEDVQE. Residues 7-37 show a composition bias toward acidic residues; sequence LLADLEEAAEEEEGGSYGEEEEEPAIEDVQE. Coiled coils occupy residues 85–120 and 181–215; these read EAAP…KYSK and EEEL…MSFI. The region spanning 215–333 is the Nop domain; that stretch reads IAPNLSIIIG…IERKFDKWQE (119 aa). Residues 334-357 are disordered; sequence PPPVKQVKPLPAPLDGQRKKRGGR. The Nuclear localization signal (NLS) signature appears at 351 to 364; it reads RKKRGGRRYRKMKE. 3 positions are modified to phosphoserine: Ser379, Ser395, and Ser432. Lys438 bears the N6-acetyllysine mark. The residue at position 439 (Ser439) is a Phosphoserine. Thr440 is subject to Phosphothreonine. The residue at position 450 (Ser450) is a Phosphoserine. Thr455 bears the Phosphothreonine mark. Residues Lys471 and Lys478 each participate in a glycyl lysine isopeptide (Lys-Gly) (interchain with G-Cter in SUMO2) cross-link.

It belongs to the PRP31 family. In terms of assembly, identified in the spliceosome B complex. Component of the U4/U6-U5 tri-snRNP complex composed of the U4, U6 and U5 snRNAs and at least PRPF3, PRPF4, PRPF6, PRPF8, PRPF31, SNRNP200, TXNL4A, SNRNP40, DDX23, CD2BP2, PPIH, SNU13, EFTUD2, SART1 and USP39. Interacts with a complex formed by SNU13 and U4 snRNA, but not with SNU13 or U4 snRNA alone. The complex formed by SNU13 and PRPF31 also binds U4atac snRNA, a characteristic component of specific, less abundant spliceosomal complexes. Interacts with PRPF6/U5 snRNP-associated 102 kDa protein. Component of some MLL1/MLL complex, at least composed of the core components KMT2A/MLL1, ASH2L, HCFC1/HCF1, WDR5 and RBBP5, as well as the facultative components BACC1, CHD8, E2F6, HSP70, INO80C, KANSL1, LAS1L, MAX, MCRS1, MGA, KAT8/MOF, PELP1, PHF20, PRP31, RING2, RUVB1/TIP49A, RUVB2/TIP49B, SENP3, TAF1, TAF4, TAF6, TAF7, TAF9 and TEX10. Interacts (via its NLS) with CTNNBL1. Interacts with USH1G. Phosphorylated by PRP4K during spliceosome assembly. As to expression, ubiquitously expressed.

The protein resides in the nucleus. Its subcellular location is the nucleus speckle. It is found in the cajal body. In terms of biological role, involved in pre-mRNA splicing as component of the spliceosome. Required for the assembly of the U4/U5/U6 tri-snRNP complex, one of the building blocks of the spliceosome. This is U4/U6 small nuclear ribonucleoprotein Prp31 from Homo sapiens (Human).